The primary structure comprises 688 residues: UvrABC system protein C (688 aa).

Positions 1–14 (MSPLDQKNKPRGGA) are enriched in basic and acidic residues. Residues 1-20 (MSPLDQKNKPRGGADDLPPE) are disordered. In terms of domain architecture, GIY-YIG spans 71-149 (NAPGVYRMMN…IKRLRPRFNV (79 aa)). A UVR domain is found at 259–294 (QKVKTEISAAMQQASEDLDFERAAIYRDRLAALSHV).

It belongs to the UvrC family. As to quaternary structure, interacts with UvrB in an incision complex.

It localises to the cytoplasm. Its function is as follows. The UvrABC repair system catalyzes the recognition and processing of DNA lesions. UvrC both incises the 5' and 3' sides of the lesion. The N-terminal half is responsible for the 3' incision and the C-terminal half is responsible for the 5' incision. The protein is UvrABC system protein C of Mesorhizobium japonicum (strain LMG 29417 / CECT 9101 / MAFF 303099) (Mesorhizobium loti (strain MAFF 303099)).